The following is an 868-amino-acid chain: Leucine--tRNA ligase (868 aa).

Residues 42-52 (PYPSGKLHMGH) carry the 'HIGH' region motif. The 'KMSKS' region signature appears at 627 to 631 (KMSKS). Position 630 (lysine 630) interacts with ATP.

It belongs to the class-I aminoacyl-tRNA synthetase family.

The protein resides in the cytoplasm. It catalyses the reaction tRNA(Leu) + L-leucine + ATP = L-leucyl-tRNA(Leu) + AMP + diphosphate. This is Leucine--tRNA ligase from Pseudomonas putida (strain W619).